Consider the following 773-residue polypeptide: Serine/threonine-protein kinase CBK1 (773 aa).

Composition is skewed to polar residues over residues 50–59 and 178–217; these read LHDQYSSHME and GNYN…SPQR. 2 disordered regions span residues 50–111 and 177–275; these read LHDQ…GGNI and NGNY…QQQQ. Composition is skewed to low complexity over residues 218-256 and 265-275; these read QPAQ…QQQP and QQTQLQQQQQQ. Residues 370–686 enclose the Protein kinase domain; the sequence is FHTVQVIGKG…ADEIKSHPFF (317 aa). Residues 376–384 and lysine 399 each bind ATP; that span reads IGKGAFGEV. Aspartate 493 serves as the catalytic Proton acceptor. The AGC-kinase C-terminal domain maps to 687 to 771; that stretch reads RGVDWNTIRQ…SRFDYLTRKN (85 aa).

It belongs to the protein kinase superfamily. STE Ser/Thr protein kinase family. COT1 subfamily.

It carries out the reaction L-seryl-[protein] + ATP = O-phospho-L-seryl-[protein] + ADP + H(+). The catalysed reaction is L-threonyl-[protein] + ATP = O-phospho-L-threonyl-[protein] + ADP + H(+). Its function is as follows. Protein kinase that seems to play a role in the regulation of cell morphogenesis and proliferation. In Candida glabrata (strain ATCC 2001 / BCRC 20586 / JCM 3761 / NBRC 0622 / NRRL Y-65 / CBS 138) (Yeast), this protein is Serine/threonine-protein kinase CBK1 (CBK1).